A 158-amino-acid polypeptide reads, in one-letter code: Transcriptional repressor NrdR (158 aa).

The tract at residues 1–20 is disordered; the sequence is MRCPYCQSEDTQVKDSRPAE. The segment at 3-34 is a zinc-finger region; sequence CPYCQSEDTQVKDSRPAEDGAVIRRRRVCSVC. Residues 11–20 are compositionally biased toward basic and acidic residues; the sequence is TQVKDSRPAE. An ATP-cone domain is found at 49 to 139; it reads LMVVKKSGRR…VYRNFSKAVD (91 aa).

It belongs to the NrdR family. Zn(2+) serves as cofactor.

Functionally, negatively regulates transcription of bacterial ribonucleotide reductase nrd genes and operons by binding to NrdR-boxes. The polypeptide is Transcriptional repressor NrdR (Brucella anthropi (strain ATCC 49188 / DSM 6882 / CCUG 24695 / JCM 21032 / LMG 3331 / NBRC 15819 / NCTC 12168 / Alc 37) (Ochrobactrum anthropi)).